A 270-amino-acid polypeptide reads, in one-letter code: Flavin-dependent thymidylate synthase (270 aa).

Residues 13 to 218 (GFVRLVDQMG…PLAWAAFEEH (206 aa)) form the ThyX domain. FAD-binding positions include serine 59, 82 to 84 (RHR), and glutamate 90. DUMP contacts are provided by residues 79–82 (QWFR), 90–94 (EISGR), and arginine 157. The ThyX motif motif lies at 82–92 (RHRTASVNEIS). Residues 173 to 175 (DLH) and histidine 179 each bind FAD. Arginine 184 serves as a coordination point for dUMP. Arginine 184 acts as the Involved in ionization of N3 of dUMP, leading to its activation in catalysis.

Belongs to the thymidylate synthase ThyX family. Homotetramer. Requires FAD as cofactor.

The catalysed reaction is dUMP + (6R)-5,10-methylene-5,6,7,8-tetrahydrofolate + NADPH + H(+) = dTMP + (6S)-5,6,7,8-tetrahydrofolate + NADP(+). It participates in pyrimidine metabolism; dTTP biosynthesis. Catalyzes the reductive methylation of 2'-deoxyuridine-5'-monophosphate (dUMP) to 2'-deoxythymidine-5'-monophosphate (dTMP) while utilizing 5,10-methylenetetrahydrofolate (mTHF) as the methyl donor, and NADPH and FADH(2) as the reductant. The protein is Flavin-dependent thymidylate synthase of Thermus thermophilus (strain ATCC 27634 / DSM 579 / HB8).